Consider the following 327-residue polypeptide: PDZ and LIM domain protein 1 (327 aa).

Threonine 2 bears the N-acetylthreonine mark. A PDZ domain is found at 3–85; the sequence is TQQIVLQGPG…NMTLTVSRSE (83 aa). Phosphoserine occurs at positions 90 and 130. Residue tyrosine 142 is modified to Phosphotyrosine. A disordered region spans residues 161 to 186; the sequence is VESKTSASGEEANSRPSAQPHPSGGL. Positions 256–315 constitute an LIM zinc-binding domain; that stretch reads PICDKCGTGIVGVFVKLRDHHRHPECYVCTDCGINLKQKGHFFVGDQIYCEKHARERVTP. Zn(2+) contacts are provided by cysteine 258, cysteine 261, histidine 278, cysteine 281, cysteine 284, cysteine 287, cysteine 305, and histidine 308. The residue at position 314 (threonine 314) is a Phosphothreonine. Tyrosine 319 bears the Phosphotyrosine mark.

In terms of assembly, interacts with ACTN1. Interacts with ACTN2 and ACTN4. Interacts with PDLIM4. In terms of tissue distribution, expressed most abundantly in heart, lung and liver, moderately in spleen and skeletal muscle, and at extremely low levels (if at all) in testis and brain tissues.

It is found in the cytoplasm. Its subcellular location is the cytoskeleton. The protein resides in the myofibril. It localises to the sarcomere. The protein localises to the z line. In terms of biological role, cytoskeletal protein that may act as an adapter that brings other proteins (like kinases) to the cytoskeleton. Involved in assembly, disassembly and directioning of stress fibers in fibroblasts. Required for the localization of ACTN1 and PALLD to stress fibers. Required for cell migration and in maintaining cell polarity of fibroblasts. This Rattus norvegicus (Rat) protein is PDZ and LIM domain protein 1 (Pdlim1).